A 171-amino-acid chain; its full sequence is Small ribosomal subunit protein uS5 (171 aa).

The S5 DRBM domain maps to 12-75 (LKEKLISVNR…EKARRNMIQV (64 aa)).

Belongs to the universal ribosomal protein uS5 family. Part of the 30S ribosomal subunit. Contacts proteins S4 and S8.

With S4 and S12 plays an important role in translational accuracy. Its function is as follows. Located at the back of the 30S subunit body where it stabilizes the conformation of the head with respect to the body. The chain is Small ribosomal subunit protein uS5 from Buchnera aphidicola subsp. Baizongia pistaciae (strain Bp).